The sequence spans 428 residues: Enolase (428 aa).

Gln-163 contributes to the (2R)-2-phosphoglycerate binding site. The active-site Proton donor is the Glu-205. Positions 242, 285, and 312 each coordinate Mg(2+). (2R)-2-phosphoglycerate contacts are provided by Lys-337, Arg-366, Ser-367, and Lys-388. Catalysis depends on Lys-337, which acts as the Proton acceptor.

The protein belongs to the enolase family. Mg(2+) is required as a cofactor.

The protein resides in the cytoplasm. It is found in the secreted. Its subcellular location is the cell surface. It carries out the reaction (2R)-2-phosphoglycerate = phosphoenolpyruvate + H2O. Its pathway is carbohydrate degradation; glycolysis; pyruvate from D-glyceraldehyde 3-phosphate: step 4/5. Functionally, catalyzes the reversible conversion of 2-phosphoglycerate (2-PG) into phosphoenolpyruvate (PEP). It is essential for the degradation of carbohydrates via glycolysis. The polypeptide is Enolase (Neisseria meningitidis serogroup B (strain ATCC BAA-335 / MC58)).